Here is a 409-residue protein sequence, read N- to C-terminus: MDFGALPPEINSGRMYAGPGSGPLLAAAAAWDALAAELYSAAASYGSTIEGLTVAPWMGPSSITMAAAVAPYVAWISVTAGQAEQAGAQAKIAAGVYETAFAATVPPPVIEANRALLMSLVATNIFGQNTPAIAATEAHYAEMWAQDAAAMYGYAGSSATASQLAPFSEPPQTTNPSATAAQSAVVAQAAGAAASSDITAQLSQLISLLPSTLQSLATTATATSASAGWDTVLQSITTILANLTGPYSIIGLGAIPGGWWLTFGQILGLAQNAPGVAALLGPKAAAGALSPLAPLRGGYIGDITPLGGGATGGIARAIYVGSLSVPQGWAEAAPVMRAVASVLPGTGAAPALAAEAPGALFGEMALSSLAGRALAGTAVRSGAGAARVAGGSVTEDVASTTTIIVIPAD.

This sequence belongs to the mycobacterial PPE family. In terms of assembly, interacts with host Toll-like receptor 2 (TLR2).

It is found in the secreted. It localises to the cell wall. Its subcellular location is the cell surface. In terms of biological role, virulence factor that modulates the production of host cytokines. The sequence is that of PPE family protein PPE32 from Mycobacterium tuberculosis (strain CDC 1551 / Oshkosh).